The primary structure comprises 421 residues: Outer capsid protein P8 (421 aa).

This sequence belongs to the phytoreovirus outer capsid protein P8 family. As to quaternary structure, homotrimer. Homomultimer. Interacts with host peroxisomal glycolate oxidase (GOX). This interaction mediates its relocation to virus factories peripheral to host peroxisomes.

It is found in the virion. The protein localises to the host cytoplasm. In terms of biological role, capsid protein which self-assembles to form the outer icosahedral capsid with a T=13 symmetry, about 70 nm in diameter and consisting of 780 molecules capsid proteins. This chain is Outer capsid protein P8, found in Alopecurus aequalis (Barnyard grass).